We begin with the raw amino-acid sequence, 296 residues long: ADP-forming sulfoacetate-CoA ligase subunit SqwL (296 aa).

CoA contacts are provided by residues Thr17–Glu20, Lys43, and Ile96–Asp98. Catalysis depends on His251, which acts as the Tele-phosphohistidine intermediate.

Belongs to the succinate/malate CoA ligase alpha subunit family. In terms of assembly, forms a complex with SqwK.

The catalysed reaction is sulfoacetate + ATP + CoA = sulfoacetyl-CoA + ADP + phosphate. Functionally, part of a variant of the sulfo-TK pathway, a D-sulfoquinovose degradation pathway that produces sulfoacetate. Hydrolyzes sulfoacetyl-coenzyme A (sulfoacetyl-CoA) to produce sulfoacetate and CoA coupled with the phosphorylation of ADP to generate ATP. Cannot use succinate, acetate or 3-hydroxypropionate, and shows only residual activities with malonate and 3-sulfopropanoate. The chain is ADP-forming sulfoacetate-CoA ligase subunit SqwL from Acholeplasma sp.